A 210-amino-acid chain; its full sequence is 3 beta-hydroxysteroid dehydrogenase/Delta 5--&gt;4-isomerase (210 aa).

Y29 (proton acceptor) is an active-site residue. Residue K33 coordinates NAD(+).

This sequence belongs to the 3-beta-HSD family.

The enzyme catalyses a 3beta-hydroxy-Delta(5)-steroid + NAD(+) = a 3-oxo-Delta(5)-steroid + NADH + H(+). It catalyses the reaction a 3-oxo-Delta(5)-steroid = a 3-oxo-Delta(4)-steroid. It participates in lipid metabolism; steroid biosynthesis. In terms of biological role, catalyzes the oxidative conversion of Delta(5)-ene-3-beta-hydroxy steroid, and the oxidative conversion of ketosteroids. The 3-beta-HSD enzymatic system plays a crucial role in the biosynthesis of all classes of hormonal steroids. During viral infection, steroid production contributes to virulence by inhibiting the host inflammatory response. This is 3 beta-hydroxysteroid dehydrogenase/Delta 5--&gt;4-isomerase (OPG174) from Variola virus (isolate Human/India/Ind3/1967) (VARV).